A 225-amino-acid chain; its full sequence is MSTIAIVDYGMGNFHSVARALQHAAPDADIRICNRPEQIDAADRVVFPGQGAMPDCMRTLNESGLRAAVERAAASKPLMGVCVGEQMLFERSEEGDTPCLGIFPGEVRRFAGPQFADPVAADQAAAAPPAAARERLKVPHMGWNQVRQTRSHALWEGIPDGTHFYFVHSYYAAPSDPALTTGVTDYGVAFTCAVAAANIFAVQFHPEKSAEHGLRLYRNFVDWQP.

One can recognise a Glutamine amidotransferase type-1 domain in the interval threonine 3–proline 225. Cysteine 82 (nucleophile) is an active-site residue. Active-site residues include histidine 205 and glutamate 207.

As to quaternary structure, heterodimer of HisH and HisF.

The protein resides in the cytoplasm. It catalyses the reaction 5-[(5-phospho-1-deoxy-D-ribulos-1-ylimino)methylamino]-1-(5-phospho-beta-D-ribosyl)imidazole-4-carboxamide + L-glutamine = D-erythro-1-(imidazol-4-yl)glycerol 3-phosphate + 5-amino-1-(5-phospho-beta-D-ribosyl)imidazole-4-carboxamide + L-glutamate + H(+). The enzyme catalyses L-glutamine + H2O = L-glutamate + NH4(+). The protein operates within amino-acid biosynthesis; L-histidine biosynthesis; L-histidine from 5-phospho-alpha-D-ribose 1-diphosphate: step 5/9. Functionally, IGPS catalyzes the conversion of PRFAR and glutamine to IGP, AICAR and glutamate. The HisH subunit catalyzes the hydrolysis of glutamine to glutamate and ammonia as part of the synthesis of IGP and AICAR. The resulting ammonia molecule is channeled to the active site of HisF. The chain is Imidazole glycerol phosphate synthase subunit HisH from Bordetella bronchiseptica (strain ATCC BAA-588 / NCTC 13252 / RB50) (Alcaligenes bronchisepticus).